The chain runs to 245 residues: tRNA pseudouridine synthase A (245 aa).

Asp-52 serves as the catalytic Nucleophile. Tyr-111 contacts substrate.

Belongs to the tRNA pseudouridine synthase TruA family. Homodimer.

It catalyses the reaction uridine(38/39/40) in tRNA = pseudouridine(38/39/40) in tRNA. Formation of pseudouridine at positions 38, 39 and 40 in the anticodon stem and loop of transfer RNAs. The sequence is that of tRNA pseudouridine synthase A from Rhodospirillum centenum (strain ATCC 51521 / SW).